The sequence spans 129 residues: Glycine cleavage system H protein (129 aa).

In terms of domain architecture, Lipoyl-binding spans 24–106 (LVRIGISAFA…HGEGWLLLVK (83 aa)). K65 carries the post-translational modification N6-lipoyllysine.

It belongs to the GcvH family. The glycine cleavage system is composed of four proteins: P, T, L and H. It depends on (R)-lipoate as a cofactor.

Functionally, the glycine cleavage system catalyzes the degradation of glycine. The H protein shuttles the methylamine group of glycine from the P protein to the T protein. This Prochlorococcus marinus (strain SARG / CCMP1375 / SS120) protein is Glycine cleavage system H protein.